A 230-amino-acid chain; its full sequence is Urease accessory protein UreF (230 aa).

Belongs to the UreF family. UreD, UreF and UreG form a complex that acts as a GTP-hydrolysis-dependent molecular chaperone, activating the urease apoprotein by helping to assemble the nickel containing metallocenter of UreC. The UreE protein probably delivers the nickel.

The protein localises to the cytoplasm. In terms of biological role, required for maturation of urease via the functional incorporation of the urease nickel metallocenter. The chain is Urease accessory protein UreF from Cupriavidus pinatubonensis (strain JMP 134 / LMG 1197) (Cupriavidus necator (strain JMP 134)).